Consider the following 470-residue polypeptide: Acetyl-CoA decarbonylase/synthase complex subunit gamma 1 (470 aa).

A 4Fe-4S domain is found at 1 to 60 (MKINSPLEAYKYLPQTNCGECGQPTCMAFASTLIDRSGKTTDCPPLIKEKKFAKKLAELD). 4 residues coordinate [4Fe-4S] cluster: C18, C21, C26, and C43.

As to quaternary structure, heterodimer of delta and gamma chains. The ACDS complex is made up of alpha, epsilon, beta, gamma and delta chains with a probable stoichiometry of (alpha(2)epsilon(2))(4)-beta(8)-(gamma(1)delta(1))(8). Corrinoid is required as a cofactor. The cofactor is [4Fe-4S] cluster.

The catalysed reaction is 5,6,7,8-tetrahydrosarcinapterin + methyl-Co(III)-[corrinoid Fe-S protein] = 5-methyltetrahydrosarcinapterin + Co(I)-[corrinoid Fe-S protein] + H(+). Its pathway is one-carbon metabolism; methanogenesis from acetate. Functionally, part of a complex that catalyzes the reversible cleavage of acetyl-CoA, allowing growth on acetate as sole source of carbon and energy. In Methanosarcina mazei (strain ATCC BAA-159 / DSM 3647 / Goe1 / Go1 / JCM 11833 / OCM 88) (Methanosarcina frisia), this protein is Acetyl-CoA decarbonylase/synthase complex subunit gamma 1.